A 217-amino-acid polypeptide reads, in one-letter code: ATP synthase F(0) complex subunit a (217 aa).

Transmembrane regions (helical) follow at residues 20 to 40, 70 to 90, 100 to 120, 126 to 146, 166 to 188, and 193 to 215; these read MNWISTLLIILFMPNFLWILP, PAFLFISLFMFILLNNFFSLF, MVFSVTLAIPFWMFFIILSTC, MIAHLIPLNTPIYLAPLMTII, LIAGHLLMTLLNFNSLMIIIIFI, and MIFELCVALIQSYVFSILSSLYS.

The protein belongs to the ATPase A chain family. In terms of assembly, component of the ATP synthase complex composed at least of ATP5F1A/subunit alpha, ATP5F1B/subunit beta, ATP5MC1/subunit c (homooctomer), MT-ATP6/subunit a, MT-ATP8/subunit 8, ATP5ME/subunit e, ATP5MF/subunit f, ATP5MG/subunit g, ATP5MK/subunit k, ATP5MJ/subunit j, ATP5F1C/subunit gamma, ATP5F1D/subunit delta, ATP5F1E/subunit epsilon, ATP5PF/subunit F6, ATP5PB/subunit b, ATP5PD/subunit d, ATP5PO/subunit OSCP. ATP synthase complex consists of a soluble F(1) head domain (subunits alpha(3) and beta(3)) - the catalytic core - and a membrane F(0) domain - the membrane proton channel (subunits c, a, 8, e, f, g, k and j). These two domains are linked by a central stalk (subunits gamma, delta, and epsilon) rotating inside the F1 region and a stationary peripheral stalk (subunits F6, b, d, and OSCP). Interacts with DNAJC30; interaction is direct.

Its subcellular location is the mitochondrion inner membrane. The catalysed reaction is H(+)(in) = H(+)(out). Subunit a, of the mitochondrial membrane ATP synthase complex (F(1)F(0) ATP synthase or Complex V) that produces ATP from ADP in the presence of a proton gradient across the membrane which is generated by electron transport complexes of the respiratory chain. ATP synthase complex consist of a soluble F(1) head domain - the catalytic core - and a membrane F(1) domain - the membrane proton channel. These two domains are linked by a central stalk rotating inside the F(1) region and a stationary peripheral stalk. During catalysis, ATP synthesis in the catalytic domain of F(1) is coupled via a rotary mechanism of the central stalk subunits to proton translocation. With the subunit c (ATP5MC1), forms the proton-conducting channel in the F(0) domain, that contains two crucial half-channels (inlet and outlet) that facilitate proton movement from the mitochondrial intermembrane space (IMS) into the matrix. Protons are taken up via the inlet half-channel and released through the outlet half-channel, following a Grotthuss mechanism. This Rhopalosiphum padi (Bird cherry-oat aphid) protein is ATP synthase F(0) complex subunit a.